A 212-amino-acid polypeptide reads, in one-letter code: MSKGFLVSLEGPEGAGKTSVLEALLPILEEKGVEVLTTREPGGVLIGEKIREVILDPSHTQMDAKTELLLYIASRRQHLVEKVLPALEAGKLVIMDRFIDSSVAYQGFGRGLDIEAIDWLNQFATDGLKPDLTLYFDIEVEEGLARIAANSDREVNRLDLEGLDLHKKVRQGYLSLLDKEGNRIVKIDASLPLEQVVETTKSVLFDGMGLAK.

Residue 11–18 coordinates ATP; sequence GPEGAGKT.

Belongs to the thymidylate kinase family.

The catalysed reaction is dTMP + ATP = dTDP + ADP. Its function is as follows. Phosphorylation of dTMP to form dTDP in both de novo and salvage pathways of dTTP synthesis. This Streptococcus pneumoniae (strain Taiwan19F-14) protein is Thymidylate kinase.